A 412-amino-acid chain; its full sequence is 1-deoxy-D-xylulose 5-phosphate reductoisomerase (412 aa).

NADPH is bound by residues Thr-5, Gly-6, Ser-7, Ile-8, Gly-31, Arg-32, Asn-33, and Asn-125. Residue Lys-126 participates in 1-deoxy-D-xylulose 5-phosphate binding. Glu-127 is an NADPH binding site. Asp-151 lines the Mn(2+) pocket. The 1-deoxy-D-xylulose 5-phosphate site is built by Ser-152, Glu-153, Ser-189, and His-212. Glu-153 contributes to the Mn(2+) binding site. Gly-218 serves as a coordination point for NADPH. Residues Ser-225, Asn-230, Lys-231, and Glu-234 each contribute to the 1-deoxy-D-xylulose 5-phosphate site. Glu-234 lines the Mn(2+) pocket.

Belongs to the DXR family. Mg(2+) serves as cofactor. Mn(2+) is required as a cofactor.

It catalyses the reaction 2-C-methyl-D-erythritol 4-phosphate + NADP(+) = 1-deoxy-D-xylulose 5-phosphate + NADPH + H(+). Its pathway is isoprenoid biosynthesis; isopentenyl diphosphate biosynthesis via DXP pathway; isopentenyl diphosphate from 1-deoxy-D-xylulose 5-phosphate: step 1/6. Functionally, catalyzes the NADPH-dependent rearrangement and reduction of 1-deoxy-D-xylulose-5-phosphate (DXP) to 2-C-methyl-D-erythritol 4-phosphate (MEP). The sequence is that of 1-deoxy-D-xylulose 5-phosphate reductoisomerase from Prochlorococcus marinus (strain SARG / CCMP1375 / SS120).